We begin with the raw amino-acid sequence, 327 residues long: N-acetylmuramoyl-L-alanine amidase sle1 (327 aa).

The N-terminal stretch at 1–25 is a signal peptide; the sequence is MRKKIIATVIGTSALAAVTWTNADA. LysM domains lie at 27–70, 86–129, and 150–193; these read TTYK…SLKV, STYT…KLKV, and TTYT…KLKV. Residues 68-89 form a disordered region; the sequence is LKVSGSTSSSTSSNTSTGSTYT. The span at 71–87 shows a compositional bias: low complexity; it reads SGSTSSSTSSNTSTGST. Residues 203–327 form the Peptidase C51 domain; the sequence is GSSSTGSAGY…SQVSSYVYIH (125 aa).

The protein resides in the secreted. The protein localises to the cell surface. The catalysed reaction is Hydrolyzes the link between N-acetylmuramoyl residues and L-amino acid residues in certain cell-wall glycopeptides.. Peptidoglycan hydrolase involved in the splitting of the septum during cell division. The protein is N-acetylmuramoyl-L-alanine amidase sle1 (sle1) of Staphylococcus saprophyticus subsp. saprophyticus (strain ATCC 15305 / DSM 20229 / NCIMB 8711 / NCTC 7292 / S-41).